We begin with the raw amino-acid sequence, 165 residues long: MMFATTDLCDAHEDRLAAGTLRVLEPVFRPFGGVRRFAGPAATLKLFEDNSLVRTALEQDGAGRVLVVDGGGSLRCALVGGNLGKLAEKNGWAGIVVNGCVRDSDELAECRVGVLALAAHPRKSDKRGAGVSDAPVDVRGTRIVPGDWIYADADGVLVSDDALLE.

Residues 80–83 (GGNL) and R102 each bind substrate. Position 103 (D103) interacts with a divalent metal cation.

The protein belongs to the class II aldolase/RraA-like family. In terms of assembly, homotrimer. A divalent metal cation is required as a cofactor.

The catalysed reaction is 4-hydroxy-4-methyl-2-oxoglutarate = 2 pyruvate. The enzyme catalyses oxaloacetate + H(+) = pyruvate + CO2. Its function is as follows. Catalyzes the aldol cleavage of 4-hydroxy-4-methyl-2-oxoglutarate (HMG) into 2 molecules of pyruvate. Also contains a secondary oxaloacetate (OAA) decarboxylase activity due to the common pyruvate enolate transition state formed following C-C bond cleavage in the retro-aldol and decarboxylation reactions. This chain is Putative 4-hydroxy-4-methyl-2-oxoglutarate aldolase, found in Burkholderia mallei (strain NCTC 10247).